The following is a 160-amino-acid chain: Phosphopantetheine adenylyltransferase (160 aa).

Residue Thr10 coordinates substrate. ATP is bound by residues 10-11 (TF) and His18. Lys42, Leu74, and Arg88 together coordinate substrate. ATP-binding positions include 89–91 (GLR), Glu99, and 124–130 (NSFISST).

This sequence belongs to the bacterial CoaD family. In terms of assembly, homohexamer. The cofactor is Mg(2+).

The protein resides in the cytoplasm. It carries out the reaction (R)-4'-phosphopantetheine + ATP + H(+) = 3'-dephospho-CoA + diphosphate. Its pathway is cofactor biosynthesis; coenzyme A biosynthesis; CoA from (R)-pantothenate: step 4/5. Reversibly transfers an adenylyl group from ATP to 4'-phosphopantetheine, yielding dephospho-CoA (dPCoA) and pyrophosphate. This chain is Phosphopantetheine adenylyltransferase, found in Aeromonas hydrophila subsp. hydrophila (strain ATCC 7966 / DSM 30187 / BCRC 13018 / CCUG 14551 / JCM 1027 / KCTC 2358 / NCIMB 9240 / NCTC 8049).